The following is a 321-amino-acid chain: Probable 2-oxoglutarate-dependent dioxygenase AOP1.2 (321 aa).

Residues 165–270 (TYYLTRLMKY…RYSTGLFSIP (106 aa)) enclose the Fe2OG dioxygenase domain. Residues H194, D196, and H251 each coordinate Fe cation. R261 lines the 2-oxoglutarate pocket.

Belongs to the iron/ascorbate-dependent oxidoreductase family. Fe(2+) is required as a cofactor.

Probable 2-oxoglutarate-dependent dioxygenase that may be involved in glucosinolates biosynthesis. May play a role in the production of aliphatic glucosinolates. The chain is Probable 2-oxoglutarate-dependent dioxygenase AOP1.2 (AOP1.2) from Arabidopsis thaliana (Mouse-ear cress).